The following is a 677-amino-acid chain: Histidine ammonia-lyase (677 aa).

Residues 269–271 (CSG) constitute a cross-link (5-imidazolinone (Cys-Gly)). At Ser270 the chain carries 2,3-didehydroalanine (Ser).

The protein belongs to the PAL/histidase family. Post-translationally, contains an active site 4-methylidene-imidazol-5-one (MIO), which is formed autocatalytically by cyclization and dehydration of residues Cys-Ser-Gly.

The catalysed reaction is L-histidine = trans-urocanate + NH4(+). The protein operates within amino-acid degradation; L-histidine degradation into L-glutamate; N-formimidoyl-L-glutamate from L-histidine: step 1/3. The sequence is that of Histidine ammonia-lyase from Caenorhabditis elegans.